We begin with the raw amino-acid sequence, 549 residues long: Chaperonin GroEL (549 aa).

ATP is bound by residues 30–33, K51, 87–91, G415, and D495; these read TLGP and DGTTT.

This sequence belongs to the chaperonin (HSP60) family. Forms a cylinder of 14 subunits composed of two heptameric rings stacked back-to-back. Interacts with the co-chaperonin GroES.

Its subcellular location is the cytoplasm. The enzyme catalyses ATP + H2O + a folded polypeptide = ADP + phosphate + an unfolded polypeptide.. Functionally, together with its co-chaperonin GroES, plays an essential role in assisting protein folding. The GroEL-GroES system forms a nano-cage that allows encapsulation of the non-native substrate proteins and provides a physical environment optimized to promote and accelerate protein folding. This Colwellia maris protein is Chaperonin GroEL.